The sequence spans 131 residues: MRHYEIVFMVHPDQSEQVPGMIERYTGAITGAEGKIHRLEDWGRRQLAYPINKLHKAHYVLLNVEAPQEVIDELETNFRFNDAVIRSMVMRTKHAVTEASPMVKAKDERRERRDDFANETADDADAGDSEE.

The interval 98–131 is disordered; that stretch reads EASPMVKAKDERRERRDDFANETADDADAGDSEE. The segment covering 104 to 116 has biased composition (basic and acidic residues); that stretch reads KAKDERRERRDDF. A compositionally biased stretch (acidic residues) spans 120 to 131; that stretch reads TADDADAGDSEE.

It belongs to the bacterial ribosomal protein bS6 family.

In terms of biological role, binds together with bS18 to 16S ribosomal RNA. This chain is Small ribosomal subunit protein bS6, found in Citrobacter koseri (strain ATCC BAA-895 / CDC 4225-83 / SGSC4696).